Consider the following 184-residue polypeptide: Tumor necrosis factor alpha-induced protein 8-like protein 2 (184 aa).

Phosphoserine is present on S3.

The protein belongs to the TNFAIP8 family. TNFAIP8L2 subfamily. As to quaternary structure, may interact with CASP8; however, such result is unclear since could not reproduce the interaction with CASP8. Interacts with RAC1. In terms of processing, phosphorylated by TAK1/MAP3K7; this phosphorylation triggers association with BTRC and subsequent ubiquitination and degradation. Post-translationally, ubiquitinated in a BTRC-depdent manner; leading to degradation mediated through the proteasome pathway.

It localises to the cytoplasm. The protein localises to the nucleus. It is found in the lysosome. Its function is as follows. Acts as a negative regulator of innate and adaptive immunity by maintaining immune homeostasis. Plays a regulatory role in the Toll-like signaling pathway by determining the strength of LPS-induced signaling and gene expression. Inhibits TCR-mediated T-cell activation and negatively regulate T-cell function to prevent hyperresponsiveness. Also inhibits autolysosome formation via negatively modulating MTOR activation by interacting with RAC1 and promoting the disassociation of the RAC1-MTOR complex. Plays an essential role in NK-cell biology by acting as a checkpoint and displaying an expression pattern correlating with NK-cell maturation process and by negatively regulating NK-cell maturation and antitumor immunity. Mechanistically, suppresses IL-15-triggered mTOR activity in NK-cells. In Otolemur garnettii (Small-eared galago), this protein is Tumor necrosis factor alpha-induced protein 8-like protein 2 (TNFAIP8L2).